The primary structure comprises 189 residues: MSHLLVYDFMEHDLANVLIVVKPSTKSLVFVSLSGTKPKLLGDAKKFVSKVNSLSKNKGSIYTLKNKSILKSDDVAWLEQLSFDFLQILAGGIDSQTNIKCEYLLGTEFQKKVWETTKTIKAGATISYQQLAVLLGNPKAVRAIGSALAKNNIAVVIPCHRIIGSKGKLTGFRWGIELKESLLRQEQAI.

The DNA site is built by tyrosine 128 and arginine 142. The Nucleophile; methyl group acceptor role is filled by cysteine 159. Serine 165 lines the DNA pocket.

Belongs to the MGMT family.

The protein localises to the nucleus. It catalyses the reaction a 6-O-methyl-2'-deoxyguanosine in DNA + L-cysteinyl-[protein] = S-methyl-L-cysteinyl-[protein] + a 2'-deoxyguanosine in DNA. It carries out the reaction a 4-O-methyl-thymidine in DNA + L-cysteinyl-[protein] = a thymidine in DNA + S-methyl-L-cysteinyl-[protein]. Functionally, involved in the cellular defense against the biological effects of O6-methylguanine (O6-MeG) and O4-methylthymine (O4-MeT) in DNA. Repairs the methylated nucleobase in DNA by stoichiometrically transferring the methyl group to a cysteine residue in the enzyme. This is a suicide reaction: the enzyme is irreversibly inactivated. This chain is Methylated-DNA--protein-cysteine methyltransferase (MGT1), found in Kluyveromyces lactis (strain ATCC 8585 / CBS 2359 / DSM 70799 / NBRC 1267 / NRRL Y-1140 / WM37) (Yeast).